We begin with the raw amino-acid sequence, 204 residues long: Prephenate decarboxylase (204 aa).

It belongs to the prephenate decarboxylase family.

The protein resides in the cytoplasm. It carries out the reaction prephenate + H(+) = 3-[(4R)-4-hydroxycyclohexa-1,5-dien-1-yl]-2-oxopropanoate + CO2. The protein operates within antibiotic biosynthesis; bacilysin biosynthesis. Part of the bacABCDEF operon responsible for the biosynthesis of the nonribosomally synthesized dipeptide antibiotic bacilysin, composed of L-alanine and L-anticapsin. Bacilysin is an irreversible inactivator of the glutaminase domain of glucosamine synthetase. BacA is an unusual prephenate decarboxylase that avoids the typical aromatization of the cyclohexadienol ring of prephenate. BacA catalyzes the protonation of prephenate (1-carboxy-4-hydroxy-alpha-oxo-2,5-cyclohexadiene-1-propanoic acid) at C6 position, followed by a decarboxylation to produce the endocyclic-delta(4),delta(8)-7R-dihydro-hydroxyphenylpyruvate (en-H2HPP). En-H2HPP is able to undergo a slow nonenzymatic isomerization to produce the exocyclic-delta(3),delta(5)-dihydro-hydroxyphenylpyruvate (ex-H2HPP). BacA isomerizes only the pro-R double bond in prephenate. In Bacillus amyloliquefaciens (Bacillus velezensis), this protein is Prephenate decarboxylase.